Consider the following 301-residue polypeptide: MEIPDFSSMKLDSRPELIDFEGVSMTRYFTDNWEKVKNFQARPDDILIATYPKAGTTWVSYILDLLYFGNESPERQTSQPIYMRVPFLEMCFQGLPLGTELADTLPTSPRPIKTHLPVQLVPKSFWEQNSKVVYVARNAKDNAVSYFHFDRMNMGQPEPGDWNTFLQKFMDGRNVFGPWYDHVNGYWKKKQTYSNILYMFYEDMVEDTGREVARLCSFLGLSTSATERERITKGVQFDVMKQNKMTNYSTLPVMDFKISPFMRKGKVGDWRNHFTVAQNEQFDEVYKQKMKNTTVKFRTEI.

53 to 58 (KAGTTW) is a binding site for 3'-phosphoadenylyl sulfate. His115 acts as the Proton acceptor in catalysis. 3'-phosphoadenylyl sulfate is bound by residues Arg137, Ser145, Tyr201, 235–240 (VQFDVM), and 263–265 (RKG).

This sequence belongs to the sulfotransferase 1 family. As to expression, expressed in liver.

Its subcellular location is the cytoplasm. Inhibited by Co(2+), Zn(2+), Cd(2+) and Pb(2+) ions. Inactivated by Hg(2+) and Cu(2+) ions. Its function is as follows. Sulfotransferase that utilizes 3'-phospho-5'-adenylyl sulfate (PAPS) as sulfonate donor to catalyze the sulfate conjugation of a variety of xenobiotic and endogenous compounds, including 2-naphthol, hydroxychlorobiphenyls, T3 (triiodo-L-thyronine), T4 (thyroxine), estrone and DOPA. This is Cytosolic sulfotransferase 2 from Danio rerio (Zebrafish).